We begin with the raw amino-acid sequence, 529 residues long: CTP synthase (529 aa).

Residues 1–267 (MKEAKFIFVT…DTQILEHFHL (267 aa)) form an amidoligase domain region. Ser15 provides a ligand contact to CTP. UTP is bound at residue Ser15. Residues 16–21 (SLGKGL) and Asp73 contribute to the ATP site. Positions 73 and 141 each coordinate Mg(2+). Residues 148-150 (DIE), 188-193 (KTKPTQ), and Lys224 each bind CTP. UTP-binding positions include 188 to 193 (KTKPTQ) and Lys224. The 238-residue stretch at 292-529 (TVSIVGKYTE…SFVKAAIDKK (238 aa)) folds into the Glutamine amidotransferase type-1 domain. Gly354 serves as a coordination point for L-glutamine. Cys381 serves as the catalytic Nucleophile; for glutamine hydrolysis. L-glutamine is bound by residues 382 to 385 (LGMQ), Glu405, and Arg459. Catalysis depends on residues His504 and Glu506.

The protein belongs to the CTP synthase family. As to quaternary structure, homotetramer.

It carries out the reaction UTP + L-glutamine + ATP + H2O = CTP + L-glutamate + ADP + phosphate + 2 H(+). The enzyme catalyses L-glutamine + H2O = L-glutamate + NH4(+). The catalysed reaction is UTP + NH4(+) + ATP = CTP + ADP + phosphate + 2 H(+). It participates in pyrimidine metabolism; CTP biosynthesis via de novo pathway; CTP from UDP: step 2/2. Its activity is regulated as follows. Allosterically activated by GTP, when glutamine is the substrate; GTP has no effect on the reaction when ammonia is the substrate. The allosteric effector GTP functions by stabilizing the protein conformation that binds the tetrahedral intermediate(s) formed during glutamine hydrolysis. Inhibited by the product CTP, via allosteric rather than competitive inhibition. In terms of biological role, catalyzes the ATP-dependent amination of UTP to CTP with either L-glutamine or ammonia as the source of nitrogen. Regulates intracellular CTP levels through interactions with the four ribonucleotide triphosphates. This chain is CTP synthase, found in Wolbachia pipientis wMel.